The chain runs to 122 residues: Large ribosomal subunit protein bL12 (122 aa).

The protein belongs to the bacterial ribosomal protein bL12 family. Homodimer. Part of the ribosomal stalk of the 50S ribosomal subunit. Forms a multimeric L10(L12)X complex, where L10 forms an elongated spine to which 2 to 4 L12 dimers bind in a sequential fashion. Binds GTP-bound translation factors.

In terms of biological role, forms part of the ribosomal stalk which helps the ribosome interact with GTP-bound translation factors. Is thus essential for accurate translation. In Levilactobacillus brevis (strain ATCC 367 / BCRC 12310 / CIP 105137 / JCM 1170 / LMG 11437 / NCIMB 947 / NCTC 947) (Lactobacillus brevis), this protein is Large ribosomal subunit protein bL12.